A 208-amino-acid polypeptide reads, in one-letter code: Protein-L-isoaspartate O-methyltransferase (208 aa).

The active site involves S59.

It belongs to the methyltransferase superfamily. L-isoaspartyl/D-aspartyl protein methyltransferase family.

The protein resides in the cytoplasm. The enzyme catalyses [protein]-L-isoaspartate + S-adenosyl-L-methionine = [protein]-L-isoaspartate alpha-methyl ester + S-adenosyl-L-homocysteine. Its function is as follows. Catalyzes the methyl esterification of L-isoaspartyl residues in peptides and proteins that result from spontaneous decomposition of normal L-aspartyl and L-asparaginyl residues. It plays a role in the repair and/or degradation of damaged proteins. The sequence is that of Protein-L-isoaspartate O-methyltransferase from Vibrio cholerae serotype O1 (strain ATCC 39541 / Classical Ogawa 395 / O395).